The following is a 259-amino-acid chain: Haloacid dehalogenase-like hydrolase domain-containing protein 2 (259 aa).

Residues aspartate 13 and serine 15 each contribute to the Mg(2+) site. Residues 13–15 (DLS) and 46–47 (TN) contribute to the substrate site. Residues 47 to 71 (NTTKESKQDLLERLKKLEFDISEDE) are a coiled coil. The residue at position 50 (lysine 50) is an N6-succinyllysine. Lysine 179 lines the substrate pocket. Aspartate 204 lines the Mg(2+) pocket.

This sequence belongs to the HAD-like hydrolase superfamily. Mg(2+) is required as a cofactor.

The protein is Haloacid dehalogenase-like hydrolase domain-containing protein 2 (HDHD2) of Bos taurus (Bovine).